Here is a 373-residue protein sequence, read N- to C-terminus: MGSMDQSIAVKSPLTYAEALANTIMNTYTVEELPPANRWHYHQGVFLCGVLRLWEATGEKRYFEYAKAYADLLIDDNGNLLFRRDELDAIQAGLILFPLYEQTKDERYVKAAKRLRSLYGTLNRTSEGGFWHKDGYPYQMWLDGLYMGGPFALKYANLKQETELFDQVVLQESLMRKHTKDAKTGLFYHAWDEAKKMPWANEETGCSPEFWARSIGWYVMSLADMIEELPKKHPNRHVWKNTLQDMIKSICRYQDKETGLWYQIVDKGDRSDNWLESSGSCLYMYAIAKGINKGYLDRAYETTLLKAYQGLIQHKTETSEDGAFLVKDICVGTSAGFYDYYVSRERSTNDLHGAGAFILAMTELEPLFRSAGK.

Residues 40 to 41 (HY), D88, and 132 to 136 (HKDGY) contribute to the substrate site. Residue D143 is the Proton donor of the active site. Substrate is bound by residues 213-217 (RSIGW) and 333-334 (TS).

It belongs to the glycosyl hydrolase 105 family. In terms of assembly, monomer.

It is found in the cytoplasm. The catalysed reaction is 2-O-(4-deoxy-beta-L-threo-hex-4-enopyranuronosyl)-alpha-L-rhamnose + H2O = 5-dehydro-4-deoxy-D-glucuronate + L-rhamnopyranose. Catalyzes the hydrolysis of unsaturated rhamnogalacturonan disaccharide to yield unsaturated D-galacturonic acid and L-rhamnose. It cannot act on unsaturated glucuronyl hydrolase (UGL) substrates containing unsaturated D-glucuronic acid at the non-reducing terminus, although the active pockets of YesR and UGL are very similar. The protein is Unsaturated rhamnogalacturonyl hydrolase YteR (yteR) of Bacillus subtilis (strain 168).